Reading from the N-terminus, the 306-residue chain is Choline-binding protein (306 aa).

Residues 1–22 (MKRKYLKLMIGLALAATLTLSG) form the signal peptide. Cys23 is lipidated: N-palmitoyl cysteine. The S-diacylglycerol cysteine moiety is linked to residue Cys23.

This sequence belongs to the OsmX family.

Its subcellular location is the cell membrane. Its function is as follows. Member of a high affinity multicomponent binding-protein-dependent transport system for choline. In Bacillus subtilis (strain 168), this protein is Choline-binding protein (opuBC).